The chain runs to 344 residues: DNA integrity scanning protein DisA (344 aa).

The region spanning 1-133 is the DAC domain; the sequence is MALLAPGTPI…GRRYLIERPE (133 aa). Residues glycine 61 and 92–96 each bind ATP; that span reads TRHRT.

The protein belongs to the DisA family. As to quaternary structure, homooctamer. Requires Mg(2+) as cofactor.

It catalyses the reaction 2 ATP = 3',3'-c-di-AMP + 2 diphosphate. Its function is as follows. Participates in a DNA-damage check-point. DisA forms globular foci that rapidly scan along the chromosomes searching for lesions. Also has diadenylate cyclase activity, catalyzing the condensation of 2 ATP molecules into cyclic di-AMP (c-di-AMP). c-di-AMP likely acts as a signaling molecule that may couple DNA integrity with a cellular process. The polypeptide is DNA integrity scanning protein DisA (Cutibacterium acnes (strain DSM 16379 / KPA171202) (Propionibacterium acnes)).